The following is a 150-amino-acid chain: Putative ribosome maturation factor RimP (150 aa).

It belongs to the RimP family.

It is found in the cytoplasm. Functionally, required for maturation of 30S ribosomal subunits. This Mycobacterium leprae (strain TN) protein is Putative ribosome maturation factor RimP.